Reading from the N-terminus, the 155-residue chain is SsrA-binding protein (155 aa).

The protein belongs to the SmpB family.

Its subcellular location is the cytoplasm. In terms of biological role, required for rescue of stalled ribosomes mediated by trans-translation. Binds to transfer-messenger RNA (tmRNA), required for stable association of tmRNA with ribosomes. tmRNA and SmpB together mimic tRNA shape, replacing the anticodon stem-loop with SmpB. tmRNA is encoded by the ssrA gene; the 2 termini fold to resemble tRNA(Ala) and it encodes a 'tag peptide', a short internal open reading frame. During trans-translation Ala-aminoacylated tmRNA acts like a tRNA, entering the A-site of stalled ribosomes, displacing the stalled mRNA. The ribosome then switches to translate the ORF on the tmRNA; the nascent peptide is terminated with the 'tag peptide' encoded by the tmRNA and targeted for degradation. The ribosome is freed to recommence translation, which seems to be the essential function of trans-translation. The sequence is that of SsrA-binding protein from Streptococcus pneumoniae (strain Hungary19A-6).